Consider the following 363-residue polypeptide: Peptide chain release factor 1 (363 aa).

Position 237 is an N5-methylglutamine (Q237).

Belongs to the prokaryotic/mitochondrial release factor family. Methylated by PrmC. Methylation increases the termination efficiency of RF1.

The protein localises to the cytoplasm. Peptide chain release factor 1 directs the termination of translation in response to the peptide chain termination codons UAG and UAA. This Hydrogenovibrio crunogenus (strain DSM 25203 / XCL-2) (Thiomicrospira crunogena) protein is Peptide chain release factor 1.